The following is a 316-amino-acid chain: MANLKAIRDRIKSVRNTRKITEAMRLVAAAKVRRAQEQVLSTRPFADRLAQVLAGLQQRLQFENVDLPLLQRREVKTVALLVVSGDRGLCGGYNSNVIRRAEQRARELSAQGLDYKFVIVGRKAGQYFQRREQPIEATYSGLEQIPTAQEANDIADQLLSLFLSGTVDRVELVYTKFLSLVASNPVVQTLLPLDPQGLASSDDEIFRLTTRGGSFTVEREKLTSEVAPLPRDMIFEQDPAQILSALLPLYLSNQLLRALQEAAASELAARMTAMNSASDNANALVGQLTLVYNKARQAAITQELLEVVAGAEALNG.

It belongs to the ATPase gamma chain family. As to quaternary structure, F-type ATPases have 2 components, CF(1) - the catalytic core - and CF(0) - the membrane proton channel. CF(1) has five subunits: alpha(3), beta(3), gamma(1), delta(1), epsilon(1). CF(0) has three main subunits: a, b and c.

The protein localises to the cellular thylakoid membrane. Functionally, produces ATP from ADP in the presence of a proton gradient across the membrane. The gamma chain is believed to be important in regulating ATPase activity and the flow of protons through the CF(0) complex. In Synechococcus sp. (strain ATCC 27144 / PCC 6301 / SAUG 1402/1) (Anacystis nidulans), this protein is ATP synthase gamma chain.